Reading from the N-terminus, the 84-residue chain is Small ribosomal subunit protein bS18 (84 aa).

It belongs to the bacterial ribosomal protein bS18 family. Part of the 30S ribosomal subunit. Forms a tight heterodimer with protein bS6.

Binds as a heterodimer with protein bS6 to the central domain of the 16S rRNA, where it helps stabilize the platform of the 30S subunit. The sequence is that of Small ribosomal subunit protein bS18 from Mycobacterium sp. (strain JLS).